Consider the following 432-residue polypeptide: Asparagine--tRNA ligase (432 aa).

This sequence belongs to the class-II aminoacyl-tRNA synthetase family. As to quaternary structure, homodimer.

Its subcellular location is the cytoplasm. The enzyme catalyses tRNA(Asn) + L-asparagine + ATP = L-asparaginyl-tRNA(Asn) + AMP + diphosphate + H(+). The chain is Asparagine--tRNA ligase from Lactobacillus delbrueckii subsp. bulgaricus (strain ATCC 11842 / DSM 20081 / BCRC 10696 / JCM 1002 / NBRC 13953 / NCIMB 11778 / NCTC 12712 / WDCM 00102 / Lb 14).